The chain runs to 881 residues: EEF1AKMT4-ECE2 readthrough transcript protein (881 aa).

Positions Met-1–Glu-160 are methyltransferase-like region. Residues Met-1–Glu-178 lie on the Cytoplasmic side of the membrane. Residues Trp-26 and Tyr-30 each contribute to the S-adenosyl-L-methionine site. A Phosphotyrosine modification is found at Tyr-39. S-adenosyl-L-methionine contacts are provided by residues Trp-41, Gly-66, Asp-88 to Tyr-89, Asp-113 to Val-114, and Lys-130. His-174 carries the phosphoserine modification. The chain crosses the membrane as a helical; Signal-anchor for type II membrane protein span at residues Leu-179 to Leu-199. At Trp-200 to Trp-881 the chain is on the lumenal side. In terms of domain architecture, Peptidase M13 spans Thr-209–Trp-881. 5 disulfides stabilise this stretch: Cys-210–Cys-215, Cys-233–Cys-866, Cys-241–Cys-826, Cys-297–Cys-546, and Cys-755–Cys-878. Asn-277, Asn-281, Asn-322, Asn-382, Asn-427, Asn-494, and Asn-650 each carry an N-linked (GlcNAc...) asparagine glycan. A Zn(2+)-binding site is contributed by His-718. Glu-719 is an active-site residue. A Zn(2+)-binding site is contributed by His-722. Residues Asn-743 and Asn-751 are each glycosylated (N-linked (GlcNAc...) asparagine). Glu-778 provides a ligand contact to Zn(2+). The Proton donor role is filled by Asp-782.

In the N-terminal section; belongs to the methyltransferase superfamily. The protein in the C-terminal section; belongs to the peptidase M13 family. Zn(2+) is required as a cofactor. Expressed at high levels in central nervous system. Expressed in adrenal glands, ovary and uterus, and at low levels in heart.

It localises to the golgi apparatus membrane. It is found in the cytoplasmic vesicle. The protein localises to the secretory vesicle membrane. It catalyses the reaction Hydrolysis of the 21-Trp-|-Val-22 bond in big endothelin to form endothelin 1.. With respect to regulation, inhibited by phosphoramidon. In terms of biological role, converts big endothelin-1 to endothelin-1. May also have methyltransferase activity. May play a role in amyloid-beta processing. This chain is EEF1AKMT4-ECE2 readthrough transcript protein, found in Mus musculus (Mouse).